The following is a 51-amino-acid chain: Micropeptide inhibiting actin cytoskeleton (51 aa).

Residues methionine 1–serine 22 form a disordered region.

In terms of assembly, interacts with aquaporin AQP2.

In terms of biological role, reduces filamentous actin fibers by interacting with aquaporin AQP2 which leads to inhibition of the expression of SEPTIN4 and integrin ITGB4. Also inhibits the activation of the EREG/EGFR signaling pathway through interaction with AQP2. The polypeptide is Micropeptide inhibiting actin cytoskeleton (Homo sapiens (Human)).